A 718-amino-acid polypeptide reads, in one-letter code: Manganese-exporting P-type ATPase (718 aa).

Positions 11–78 (GRMRVKVDWV…AIKGAAHVAA (68 aa)) constitute an HMA domain. The next 6 helical transmembrane spans lie at 87 to 105 (HSAE…GGVA), 128 to 146 (TVAT…RGAL), 154 to 168 (AGTD…VASL), 177 to 191 (LTVL…YLQD), 327 to 351 (VGEN…LITG), and 357 to 375 (MTML…TPTA). Residue D408 is the 4-aspartylphosphate intermediate of the active site. Positions 408, 410, and 610 each coordinate Mg(2+). 2 consecutive transmembrane segments (helical) span residues 661–680 (AVDV…AAGL) and 690–709 (PVLA…ANSS).

Belongs to the cation transport ATPase (P-type) (TC 3.A.3) family. Type IB subfamily.

It is found in the cell membrane. It carries out the reaction Mn(2+)(in) + ATP + H2O = Mn(2+)(out) + ADP + phosphate + H(+). Functionally, high affinity, slow turnover Mn(2+) transporting ATPase. The protein is Manganese-exporting P-type ATPase (ctpC) of Mycobacterium bovis (strain ATCC BAA-935 / AF2122/97).